We begin with the raw amino-acid sequence, 332 residues long: tRNA-dihydrouridine(20/20a) synthase (332 aa).

FMN is bound by residues 19-21 (PML) and Q71. C101 serves as the catalytic Proton donor. Residues K140, H173, 213–215 (NGG), and 235–236 (GR) contribute to the FMN site.

Belongs to the Dus family. DusA subfamily. FMN is required as a cofactor.

The enzyme catalyses 5,6-dihydrouridine(20) in tRNA + NADP(+) = uridine(20) in tRNA + NADPH + H(+). It carries out the reaction 5,6-dihydrouridine(20) in tRNA + NAD(+) = uridine(20) in tRNA + NADH + H(+). It catalyses the reaction 5,6-dihydrouridine(20a) in tRNA + NADP(+) = uridine(20a) in tRNA + NADPH + H(+). The catalysed reaction is 5,6-dihydrouridine(20a) in tRNA + NAD(+) = uridine(20a) in tRNA + NADH + H(+). In terms of biological role, catalyzes the synthesis of 5,6-dihydrouridine (D), a modified base found in the D-loop of most tRNAs, via the reduction of the C5-C6 double bond in target uridines. Specifically modifies U20 and U20a in tRNAs. This Salmonella typhi protein is tRNA-dihydrouridine(20/20a) synthase.